A 173-amino-acid polypeptide reads, in one-letter code: Co-chaperone protein HscB homolog (173 aa).

A J domain is found at 5–77 (CHFAQFDLQP…PRRALYLLTL (73 aa)).

It belongs to the HscB family. Interacts with HscA and stimulates its ATPase activity.

Functionally, co-chaperone involved in the maturation of iron-sulfur cluster-containing proteins. Seems to help targeting proteins to be folded toward HscA. In Pseudomonas aeruginosa (strain UCBPP-PA14), this protein is Co-chaperone protein HscB homolog.